The primary structure comprises 245 residues: 1-(5-phosphoribosyl)-5-[(5-phosphoribosylamino)methylideneamino] imidazole-4-carboxamide isomerase (245 aa).

Catalysis depends on Asp7, which acts as the Proton acceptor. Asp129 functions as the Proton donor in the catalytic mechanism.

Belongs to the HisA/HisF family.

Its subcellular location is the cytoplasm. It carries out the reaction 1-(5-phospho-beta-D-ribosyl)-5-[(5-phospho-beta-D-ribosylamino)methylideneamino]imidazole-4-carboxamide = 5-[(5-phospho-1-deoxy-D-ribulos-1-ylimino)methylamino]-1-(5-phospho-beta-D-ribosyl)imidazole-4-carboxamide. It functions in the pathway amino-acid biosynthesis; L-histidine biosynthesis; L-histidine from 5-phospho-alpha-D-ribose 1-diphosphate: step 4/9. The sequence is that of 1-(5-phosphoribosyl)-5-[(5-phosphoribosylamino)methylideneamino] imidazole-4-carboxamide isomerase from Shewanella sp. (strain W3-18-1).